The primary structure comprises 323 residues: Cytosolic sulfotransferase 5 (323 aa).

Position 69–74 (69–74 (KCGTTW)) interacts with 3'-phosphoadenylyl sulfate. Histidine 135 serves as the catalytic Proton acceptor. 3'-phosphoadenylyl sulfate contacts are provided by residues arginine 157, serine 165, and 289–291 (RKG).

The protein belongs to the sulfotransferase 1 family. Expressed in inflorescence stems, roots and siliques.

It localises to the cytoplasm. Functionally, sulfotransferase that utilizes 3'-phospho-5'-adenylyl sulfate (PAPS) as sulfonate donor to specifically catalyze the sulfate conjugation of flavones and flavonols. Strictly specific for the position 7. Substrate preference is kaempferol 3-sulfate &gt; isorhamnetin &gt; kaempferol. The sequence is that of Cytosolic sulfotransferase 5 (SOT5) from Arabidopsis thaliana (Mouse-ear cress).